A 294-amino-acid polypeptide reads, in one-letter code: Probable 3-hydroxyisobutyrate dehydrogenase (294 aa).

NAD(+) is bound by residues Thr-3 to Asp-31 and Thr-93. The active site involves Lys-168. Residue Lys-243 participates in NAD(+) binding.

The protein belongs to the HIBADH-related family.

It catalyses the reaction 3-hydroxy-2-methylpropanoate + NAD(+) = 2-methyl-3-oxopropanoate + NADH + H(+). It participates in amino-acid degradation; L-valine degradation. The sequence is that of Probable 3-hydroxyisobutyrate dehydrogenase (mmsB) from Mycobacterium bovis (strain ATCC BAA-935 / AF2122/97).